A 273-amino-acid polypeptide reads, in one-letter code: Coiled-coil domain-containing protein 122 (273 aa).

A compositionally biased stretch (basic and acidic residues) spans 1–17; that stretch reads MSDNKERKSQGFPKEDN. The disordered stretch occupies residues 1-39; sequence MSDNKERKSQGFPKEDNQDTSSLADAVEKVAKQQQSQAS. 2 coiled-coil regions span residues 24–116 and 179–269; these read ADAV…TAQE and NRIT…RKCI.

The chain is Coiled-coil domain-containing protein 122 (CCDC122) from Homo sapiens (Human).